A 600-amino-acid polypeptide reads, in one-letter code: Sulfite reductase [NADPH] flavoprotein alpha-component (600 aa).

A Flavodoxin-like domain is found at 63-201 (ITLISASQTG…VADQWRKQLT (139 aa)). FMN-binding positions include 69 to 74 (SQTGNA), 116 to 119 (STQG), and 152 to 161 (LGDTSYERFC). One can recognise an FAD-binding FR-type domain in the interval 235–449 (QAPLTAALAT…IEHNDNFRLP (215 aa)). Residues Thr-323, His-357, 387–390 (RLYS), 405–407 (TVG), Tyr-411, and 420–423 (GGAS) contribute to the FAD site. NADP(+) contacts are provided by residues 520-521 (SR), 526-530 (KIYVQ), and Asp-562. Residue Tyr-600 participates in FAD binding.

It belongs to the NADPH-dependent sulphite reductase flavoprotein subunit CysJ family. This sequence in the N-terminal section; belongs to the flavodoxin family. The protein in the C-terminal section; belongs to the flavoprotein pyridine nucleotide cytochrome reductase family. In terms of assembly, alpha(8)-beta(8). The alpha component is a flavoprotein, the beta component is a hemoprotein. The cofactor is FAD. Requires FMN as cofactor.

It carries out the reaction hydrogen sulfide + 3 NADP(+) + 3 H2O = sulfite + 3 NADPH + 4 H(+). It functions in the pathway sulfur metabolism; hydrogen sulfide biosynthesis; hydrogen sulfide from sulfite (NADPH route): step 1/1. Component of the sulfite reductase complex that catalyzes the 6-electron reduction of sulfite to sulfide. This is one of several activities required for the biosynthesis of L-cysteine from sulfate. The flavoprotein component catalyzes the electron flow from NADPH -&gt; FAD -&gt; FMN to the hemoprotein component. The protein is Sulfite reductase [NADPH] flavoprotein alpha-component of Photorhabdus laumondii subsp. laumondii (strain DSM 15139 / CIP 105565 / TT01) (Photorhabdus luminescens subsp. laumondii).